The chain runs to 174 residues: ATP-dependent protease subunit HslV (174 aa).

Thr2 is an active-site residue. Na(+) contacts are provided by Gly157, Cys160, and Thr163.

It belongs to the peptidase T1B family. HslV subfamily. A double ring-shaped homohexamer of HslV is capped on each side by a ring-shaped HslU homohexamer. The assembly of the HslU/HslV complex is dependent on binding of ATP.

The protein localises to the cytoplasm. It catalyses the reaction ATP-dependent cleavage of peptide bonds with broad specificity.. Allosterically activated by HslU binding. Its function is as follows. Protease subunit of a proteasome-like degradation complex believed to be a general protein degrading machinery. This is ATP-dependent protease subunit HslV from Cellvibrio japonicus (strain Ueda107) (Pseudomonas fluorescens subsp. cellulosa).